The sequence spans 908 residues: DNA polymerase I (908 aa).

The 5'-3' exonuclease domain occupies 1-318; that stretch reads MKELYLIDAL…DDINTIDTEN (318 aa). The 3'-5' exonuclease domain occupies 319-531; sequence VKYRSITTKI…MEENGIYLDK (213 aa). The tract at residues 532–908 is polymerase; sequence EYLKEYGKEL…ETGKSWGEIH (377 aa).

Belongs to the DNA polymerase type-A family.

The catalysed reaction is DNA(n) + a 2'-deoxyribonucleoside 5'-triphosphate = DNA(n+1) + diphosphate. Functionally, in addition to polymerase activity, this DNA polymerase exhibits 3'-5' and 5'-3' exonuclease activity. This chain is DNA polymerase I (polA), found in Borreliella burgdorferi (strain ATCC 35210 / DSM 4680 / CIP 102532 / B31) (Borrelia burgdorferi).